Reading from the N-terminus, the 196-residue chain is Probable malonic semialdehyde reductase RutE (196 aa).

The protein belongs to the nitroreductase family. HadB/RutE subfamily. FMN is required as a cofactor.

The catalysed reaction is 3-hydroxypropanoate + NADP(+) = 3-oxopropanoate + NADPH + H(+). In terms of biological role, may reduce toxic product malonic semialdehyde to 3-hydroxypropionic acid, which is excreted. In Cronobacter sakazakii (strain ATCC BAA-894) (Enterobacter sakazakii), this protein is Probable malonic semialdehyde reductase RutE.